The chain runs to 208 residues: Redox-sensing transcriptional repressor Rex (208 aa).

A DNA-binding region (H-T-H motif) is located at residues 15-54 (SYYMCLERLLDEGVEVVSSEELARRLDLKASQIRKDLSYF). 89–94 (GAGNIG) lines the NAD(+) pocket.

This sequence belongs to the transcriptional regulatory Rex family. As to quaternary structure, homodimer.

The protein resides in the cytoplasm. Modulates transcription in response to changes in cellular NADH/NAD(+) redox state. The chain is Redox-sensing transcriptional repressor Rex from Thermotoga petrophila (strain ATCC BAA-488 / DSM 13995 / JCM 10881 / RKU-1).